A 227-amino-acid chain; its full sequence is Large ribosomal subunit protein uL3 (227 aa).

The disordered stretch occupies residues 129–154; it reads GMQPVSHGQSDRTRSRGSSGAQGPQK.

It belongs to the universal ribosomal protein uL3 family. As to quaternary structure, part of the 50S ribosomal subunit. Forms a cluster with proteins L14 and L19.

Functionally, one of the primary rRNA binding proteins, it binds directly near the 3'-end of the 23S rRNA, where it nucleates assembly of the 50S subunit. The protein is Large ribosomal subunit protein uL3 of Endomicrobium trichonymphae.